Consider the following 102-residue polypeptide: ATP-dependent Clp protease adapter protein ClpS (102 aa).

Belongs to the ClpS family. As to quaternary structure, binds to the N-terminal domain of the chaperone ClpA.

In terms of biological role, involved in the modulation of the specificity of the ClpAP-mediated ATP-dependent protein degradation. The polypeptide is ATP-dependent Clp protease adapter protein ClpS (Shewanella sediminis (strain HAW-EB3)).